A 247-amino-acid polypeptide reads, in one-letter code: ATP synthase subunit a, plastid (247 aa).

Transmembrane regions (helical) follow at residues 33–53 (FLVHGQVLITSWVVIAILLGS), 95–115 (VPFIGTMFLFIFVSNWSGALL), 134–154 (INTTVALALLTSAAYFYAGIL), 199–219 (LVVVVLVSLVPSVVPIPVMLL), and 220–240 (GLFTSGIQALIFATLAAAYIG).

This sequence belongs to the ATPase A chain family. F-type ATPases have 2 components, CF(1) - the catalytic core - and CF(0) - the membrane proton channel. CF(1) has five subunits: alpha(3), beta(3), gamma(1), delta(1), epsilon(1). CF(0) has four main subunits: a, b, b' and c.

It is found in the plastid membrane. In terms of biological role, key component of the proton channel; it plays a direct role in the translocation of protons across the membrane. This chain is ATP synthase subunit a, plastid, found in Cuscuta exaltata (Tall dodder).